Consider the following 608-residue polypeptide: Rap1 GTPase-GDP dissociation stimulator 1 (608 aa).

ARM repeat units follow at residues 89 to 131 and 171 to 212; these read GLIS…DQAG and DSLQ…NLAE. The tract at residues 122-171 is prevents binding to prenylated RHOA; that stretch reads EGRSAVDQAGGAQIVVDHLRSLCSKTDPASEKLLTVFCGMLMNYSNEKND. Position 231 is an N6-acetyllysine (lysine 231). ARM repeat units follow at residues 348 to 391, 392 to 432, and 480 to 520; these read DGNC…NLAI, PVVN…MLID, and SKDV…LIAA.

As to quaternary structure, interacts with RABL3. Interacts with RHOT1. In terms of assembly, interacts with unprenylated RHOA; the interaction is direct. Interacts with RAP1A. Interacts with KRAS. Interacts with RAC1. Interacts with RAP1B. Preferentially interacts with unprenylated GTPases that will become geranylgeranylated. May also interact with prenylated GTPases. Interacts with prenylated RHOA; the interaction is direct and in a 1:1 stoichiometry. Interacts with RAP1A. Interacts with KRAS. Interacts with RAC1. Interacts with RAP1B. Preferentially interacts with prenylated GTPases. Post-translationally, the N-terminus is blocked. In terms of processing, forms covalent cross-links mediated by transglutaminase TGM2, between a glutamine and the epsilon-amino group of a lysine residue, forming homopolymers and heteropolymers. Brain.

The protein localises to the cytoplasm. It is found in the cytosol. Its subcellular location is the endoplasmic reticulum. It localises to the mitochondrion. The protein resides in the nucleus. Its function is as follows. Acts as a GEF (guanine nucleotide exchange factor) for the Rho family of small GTP-binding proteins (G proteins) that stimulates the dissociation of GDP to enable subsequent binding of GTP. Additionally, appears to chaperone the processing and/or trafficking of small GTPases containing a C-terminal polybasic region independently of GEF activity. Targets include RAP1A/RAP1B, RHOA, RHOB, RHOC, RAC1 and KRAS. Regulates mitochondrial dynamics by controlling RHOT function to promote mitochondrial fission during high calcium conditions. Able to promote the Ca(2+) release from the endoplasmic reticulum via both inositol trisphosphate (Ins3P) and ryanodine sensitive receptors leading to a enhanced mitochondrial Ca(2+) uptake. Acts as a GEF (guanine nucleotide exchange factor) for unprenylated RHOA. Chaperones the entry and passage of small GTPases through the prenylation pathway. Recognizes the last amino acid in the GTPase C-terminal CAAX motif with a preference for 'Leu' over 'Met', indicating involvement in the geranylgeranylation pathway. May also recognize prenylated GTPases. In terms of biological role, acts as a GEF (guanine nucleotide exchange factor) for prenylated RHOA. Acts as a GEF for RHOC. Chaperones the downstream trafficking and/or processing of small newly prenylated GTPases. Escorts RAC1 to the nucleus. The sequence is that of Rap1 GTPase-GDP dissociation stimulator 1 (RAP1GDS1) from Bos taurus (Bovine).